Reading from the N-terminus, the 234-residue chain is ATP synthase subunit a 2 (234 aa).

6 consecutive transmembrane segments (helical) span residues 29-49, 90-110, 116-136, 147-167, 186-206, and 207-227; these read FFQH…VGLL, LIAT…IPGF, SLNT…IVGV, FMGP…IGHL, IVLM…MMLM, and GILV…IYIA.

The protein belongs to the ATPase A chain family. F-type ATPases have 2 components, CF(1) - the catalytic core - and CF(0) - the membrane proton channel. CF(1) has five subunits: alpha(3), beta(3), gamma(1), delta(1), epsilon(1). CF(0) has three main subunits: a(1), b(2) and c(9-12). The alpha and beta chains form an alternating ring which encloses part of the gamma chain. CF(1) is attached to CF(0) by a central stalk formed by the gamma and epsilon chains, while a peripheral stalk is formed by the delta and b chains.

The protein resides in the cell inner membrane. Functionally, key component of the proton channel; it plays a direct role in the translocation of protons across the membrane. The chain is ATP synthase subunit a 2 from Syntrophotalea carbinolica (strain DSM 2380 / NBRC 103641 / GraBd1) (Pelobacter carbinolicus).